A 190-amino-acid chain; its full sequence is Potassium-transporting ATPase KdpC subunit (190 aa).

A helical membrane pass occupies residues 10–30 (TFLFLLLITGGVYPLLTTALG).

The protein belongs to the KdpC family. The system is composed of three essential subunits: KdpA, KdpB and KdpC.

Its subcellular location is the cell inner membrane. Functionally, part of the high-affinity ATP-driven potassium transport (or Kdp) system, which catalyzes the hydrolysis of ATP coupled with the electrogenic transport of potassium into the cytoplasm. This subunit acts as a catalytic chaperone that increases the ATP-binding affinity of the ATP-hydrolyzing subunit KdpB by the formation of a transient KdpB/KdpC/ATP ternary complex. The chain is Potassium-transporting ATPase KdpC subunit from Escherichia coli O6:H1 (strain CFT073 / ATCC 700928 / UPEC).